The primary structure comprises 1094 residues: Probable arabinosyltransferase A (1094 aa).

The next 13 membrane-spanning stretches (helical) occupy residues 12 to 34 (IARL…VPLL), 205 to 224 (AVML…LAAL), 247 to 269 (GFAS…VIGA), 322 to 344 (VWMR…RFVL), 356 to 375 (SNRV…WLPF), 408 to 430 (AAVA…IALA), 451 to 470 (GLLA…TVVV), 519 to 536 (FAVL…FVLL), 543 to 565 (GLAS…LLTF), 575 to 597 (GAFA…RIGL), 604 to 626 (TLYV…GWFY), 641 to 663 (IASH…LAAW), and 684 to 706 (ILAS…GSMA).

Belongs to the emb family.

It is found in the cell membrane. Functionally, arabinosyl transferase responsible for the polymerization of arabinose into the arabinan of arabinogalactan. The chain is Probable arabinosyltransferase A (embA) from Mycobacterium tuberculosis (strain CDC 1551 / Oshkosh).